Reading from the N-terminus, the 245-residue chain is Putative outer membrane protein RBE_0022 (245 aa).

The N-terminal stretch at 1–23 (MIRMSKRLGVILFVSCISINSFA) is a signal peptide.

The protein belongs to the OmpW/AlkL family.

The protein resides in the cell outer membrane. This Rickettsia bellii (strain RML369-C) protein is Putative outer membrane protein RBE_0022.